The chain runs to 402 residues: Elongation factor Tu (402 aa).

Residues 16–211 (KEHINIGTIG…AVDSYIDSPV (196 aa)) form the tr-type G domain. The interval 25–32 (GHVDHGKT) is G1. 25–32 (GHVDHGKT) lines the GTP pocket. Thr32 is a Mg(2+) binding site. The tract at residues 66-70 (GITIN) is G2. Residues 87–90 (DCPG) are G3. GTP contacts are provided by residues 87–91 (DCPGH) and 142–145 (NKID). The segment at 142–145 (NKID) is G4. Residues 181-183 (SAR) form a G5 region.

This sequence belongs to the TRAFAC class translation factor GTPase superfamily. Classic translation factor GTPase family. EF-Tu/EF-1A subfamily. Monomer.

It localises to the cytoplasm. It catalyses the reaction GTP + H2O = GDP + phosphate + H(+). GTP hydrolase that promotes the GTP-dependent binding of aminoacyl-tRNA to the A-site of ribosomes during protein biosynthesis. The sequence is that of Elongation factor Tu from Mesomycoplasma hyopneumoniae (strain J / ATCC 25934 / NCTC 10110) (Mycoplasma hyopneumoniae).